The following is a 432-amino-acid chain: Transcription factor E2F1 (432 aa).

2 disordered regions span residues 39–85 (DVGA…GRPP) and 98–126 (YLAGSSGPFRGRGRHPGKGVKSPGEKSRY). Positions 65 to 106 (ATPQAPRPAPSAPRPALGRPPVKRRLDLETDHQYLAGSSGPF) are cyclin A:CDK2 binding. Positions 87–189 (KRRLDLETDH…KKSKNHIQWL (103 aa)) are interaction with BIRC2/c-IAP1. The DNA-binding element occupies 108–192 (GRGRHPGKGV…KNHIQWLGSR (85 aa)). An N6-acetyllysine mark is found at Lys115, Lys118, and Lys123. The tract at residues 151-172 (LNWAAEVLKVQKRRIYDITNVL) is leucine-zipper. The DEF box signature appears at 156 to 192 (EVLKVQKRRIYDITNVLEGIQLIAKKSKNHIQWLGSR). Position 183 is an N6-methyllysine; by SETD7 (Lys183). Residues 190 to 377 (GSRTMVGIGQ…RLSPLVAADS (188 aa)) are required for interaction with TRIM28. Residues 193-282 (TMVGIGQRLE…AVDSAETFQI (90 aa)) are dimerization. The tract at residues 297 to 342 (PEESAEGISPGRTSYQETSGEDRNADSGTAGPPPSPPSTSPTLDPS) is disordered. The interval 363–432 (PMEEDRLSPL…DFGDLTPLDF (70 aa)) is transactivation. A phosphoserine mark is found at Ser370 and Ser398. Residues 404 to 421 (VDYHFGLEEGEGIRDLFD) are RB1 binding. A Phosphothreonine modification is found at Thr428.

Belongs to the E2F/DP family. As to quaternary structure, component of the DRTF1/E2F transcription factor complex. Forms heterodimers with DP family members. The E2F1 complex binds specifically hypophosphorylated RB1, the interaction represses E2F1-driven transcription. During the cell cycle, RB1 becomes phosphorylated in mid-to-late G1 phase, detaches from the DRTF1/E2F complex, rendering E2F transcriptionally active. Interacts with TRRAP, which probably mediates its interaction with histone acetyltransferase complexes, leading to transcription activation. Binds TOPBP1 and EAPP. Interacts with ARID3A. Interacts with TRIM28; the interaction inhibits E2F1 acetylation through recruiting HDAC1 and represses its transcriptional activity. Interaction with KAT2B; the interaction acetylates E2F1 enhancing its DNA-binding and transcriptional activity. Interacts with BIRC2/c-IAP1 (via BIR domains). The complex TFDP1:E2F1 interacts with CEBPA; the interaction prevents CEBPA binding to target genes promoters and represses its transcriptional activity. Interacts with RRP1B. Interacts with HCFC1. Interacts with KMT2E; the interaction is probably indirect and is mediated via HCFC1. Interacts with DCAF5 and L3MBTL3; the interaction requires methylation at Lys-183 and is necessary to target E2F1 for ubiquitination by the CRL4-DCAF5 E3 ubiquitin ligase complex. In terms of processing, phosphorylated by CDK2 and cyclin A-CDK2 in the S-phase. Phosphorylation by CHEK2 stabilizes E2F1 upon DNA damage and regulates its effect on transcription and apoptosis. Phosphorylation at Ser-398 by GSK3B promotes interaction with USP11, leading to its deubiquitination and stabilization. Ubiquitinated via 'Lys-63'-linked ubiquitin, leading to its degradation. Deubiquitinated by USP11 following phosphorylation by GSK3B, promoting its stability. Post-translationally, acetylation stimulates DNA-binding. Enhanced under stress conditions such as DNA damage and inhibited by retinoblastoma protein RB1. Regulated by KAP1/TRIM28 which recruits HDAC1 to E2F1 resulting in deacetylation. In terms of processing, methylation at Lys-183 by SETD7 promotes E2F1 ubiquitin-dependent proteasomal degradation.

It is found in the nucleus. Its activity is regulated as follows. BIRC2/c-IAP1 stimulates its transcriptional activity. Functionally, transcription activator that binds DNA cooperatively with DP proteins through the E2 recognition site, 5'-TTTC[CG]CGC-3' found in the promoter region of a number of genes whose products are involved in cell cycle regulation or in DNA replication. The DRTF1/E2F complex functions in the control of cell-cycle progression from G1 to S phase. E2F1 binds preferentially RB1 in a cell-cycle dependent manner. It can mediate both cell proliferation and TP53/p53-dependent apoptosis. Blocks adipocyte differentiation by binding to specific promoters repressing CEBPA binding to its target gene promoters. Directly activates transcription of PEG10. Positively regulates transcription of RRP1B. The sequence is that of Transcription factor E2F1 from Rattus norvegicus (Rat).